We begin with the raw amino-acid sequence, 87 residues long: CRISPR-associated endoribonuclease Cas2 (87 aa).

Position 8 (D8) interacts with Mg(2+).

This sequence belongs to the CRISPR-associated endoribonuclease Cas2 protein family. As to quaternary structure, homodimer, forms a heterotetramer with a Cas1 homodimer. Requires Mg(2+) as cofactor.

Its function is as follows. CRISPR (clustered regularly interspaced short palindromic repeat), is an adaptive immune system that provides protection against mobile genetic elements (viruses, transposable elements and conjugative plasmids). CRISPR clusters contain sequences complementary to antecedent mobile elements and target invading nucleic acids. CRISPR clusters are transcribed and processed into CRISPR RNA (crRNA). Functions as a ssRNA-specific endoribonuclease. Involved in the integration of spacer DNA into the CRISPR cassette. The chain is CRISPR-associated endoribonuclease Cas2 from Methanosarcina acetivorans (strain ATCC 35395 / DSM 2834 / JCM 12185 / C2A).